We begin with the raw amino-acid sequence, 235 residues long: SMN complex subunit yip11/gem2 (235 aa).

The tract at residues 1 to 34 (MPSKRKRNPLQYQTSGSLDEETNQRSAFPQIDNN) is disordered. Over residues 24-34 (QRSAFPQIDNN) the composition is skewed to polar residues. Serine 117 and serine 118 each carry phosphoserine.

It belongs to the gemin-2 family. Part of the core SMN complex at least composed of smn1, yip11/gem2, gem6, gem7 and gem8. Interacts with smn1; the interaction is direct.

The protein localises to the nucleus. The SMN complex catalyzes the assembly of small nuclear ribonucleoproteins (snRNPs), the building blocks of the spliceosome, and thereby plays an important role in the splicing of cellular pre-mRNAs. Most spliceosomal snRNPs contain a common set of Sm proteins smb1, smd1, smd2, smd3, sme1, smf1 and smg1 that assemble in a heptameric protein ring on the Sm site of the small nuclear RNA to form the core snRNP. In the cytosol, the Sm proteins smd1, smd2, sme1, smf1 and smg1 (5Sm) are trapped in an inactive 6S pICln-Sm complex by the chaperone saf5. To complete assembly of core snRNPs, the SMN complex accepts 5Sm from saf5. Binding of snRNA inside 5Sm ultimately triggers eviction of the SMN complex, thereby allowing binding of smd3 and smb1 to complete assembly of the core snRNP. Within the SMN complex, yip11/gem2 constrains the conformation of 5Sm, thereby promoting 5Sm binding to snRNA containing the snRNP code (a nonameric Sm site and a 3'-adjacent stem-loop), thus preventing progression of assembly until a cognate substrate is bound. This Schizosaccharomyces pombe (strain 972 / ATCC 24843) (Fission yeast) protein is SMN complex subunit yip11/gem2 (yip11).